Consider the following 951-residue polypeptide: Serine/threonine-protein phosphatase 4 regulatory subunit 1 (951 aa).

HEAT repeat units lie at residues 26–63 (ESDVIIIPSALDFVSQDEMLTPLGRLDKYAASENVFNR), 65–81 (MVARSLLDTLREVCDDE), 82–119 (RDCIAVLERISRLADDSEPTVRAELMEQVPHIALFCQE), 127–164 (AFSKYLLPIVVRYLADQNNQVRKTSQAALLALLEQELI), 168–206 (DVETKVCPVLIDLTAPDSNDDVKTEAVAIMCKMAPMVGK), 208–246 (ITERLILPRFCEMCCDCRMFHVRKVCAANFGDICSVVGQ), 248–285 (ATEEMLLPRFFQLCSDNVWGVRKACAECFMAVSCATCQ), and 287–324 (IRRTKLSALFINLISDPSRWVRQAAFQSLGPFISTFAN). Disordered stretches follow at residues 325–377 (PSSS…HSSA), 411–451 (SESP…PLDQ), and 474–499 (QQDPEERLSPERTGDVPAAPLPGPPN). Residues 332-365 (FKDESKSSEDSSAEDKDRMRDNDVVEEEHRRPED) are compositionally biased toward basic and acidic residues. 2 stretches are compositionally biased toward polar residues: residues 411–421 (SESPQEAASND) and 430–445 (NSKSASRPDAGTSSPE). Basic and acidic residues predominate over residues 474–487 (QQDPEERLSPERTG). An HEAT 9 repeat occupies 506–543 (KELEEMIENLEPHMDDPDVKAQVDVLSAALRASSLDAH). Residues 590–612 (DYVHGGADVSPGDGFSPDEDRRP) form a disordered region. HEAT repeat units follow at residues 699 to 735 (LTAADLVPIFNGFLKDLDEVRIGVLKHLHDFLKLLHI), 800 to 838 (WISYKLVSEMVKKLHTATPPTFGVDLINELVENFGRCPK), and 862 to 899 (QFAVHLMPHLLTLANDRVPNVRVLLAKTLRQTLLEKEY). Phosphoserine is present on Ser936.

In terms of assembly, serine/threonine-protein phosphatase 4 (PP4) occurs in different assemblies of the catalytic and one or more regulatory subunits. Component of the PP4 complex PPP4C-PPP4R1. Interacts with HDAC3.

In terms of biological role, regulatory subunit of serine/threonine-protein phosphatase 4. May play a role in regulation of cell division in renal glomeruli. The PPP4C-PPP4R1 PP4 complex may play a role in dephosphorylation and regulation of HDAC3. Plays a role in the inhibition of TNF-induced NF-kappa-B activation by regulating the dephosphorylation of TRAF2. This is Serine/threonine-protein phosphatase 4 regulatory subunit 1 (Ppp4r1) from Mus musculus (Mouse).